Reading from the N-terminus, the 663-residue chain is Dual specificity protein phosphatase 8 (663 aa).

The Rhodanese domain occupies 23-138; that stretch reads GPGGPLVIDS…FSSCFPGLCE (116 aa). The Tyrosine-protein phosphatase domain maps to 160–302; the sequence is GLTRILPHLY…LLEYERSLKL (143 aa). The active-site Phosphocysteine intermediate is Cys-246. Disordered stretches follow at residues 313 to 367 and 404 to 624; these read LGTP…STAP and YAPS…FKRR. 3 stretches are compositionally biased toward low complexity: residues 334–353, 427–448, and 546–557; these read STSE…REGS, LDSP…PDSV, and SAGAPGPGNSSS. Gly residues predominate over residues 558 to 577; sequence SGGGGGGGGGGGGGGGGGGS. Residues 578–600 show a composition bias toward low complexity; the sequence is SSSNSSSSSSSSSSSSSSSSSSS.

Belongs to the protein-tyrosine phosphatase family. Non-receptor class dual specificity subfamily. As to quaternary structure, monomer. In terms of tissue distribution, expressed predominantly in brain and lung.

Its subcellular location is the cytoplasm. The protein resides in the nucleus. It carries out the reaction O-phospho-L-tyrosyl-[protein] + H2O = L-tyrosyl-[protein] + phosphate. The enzyme catalyses O-phospho-L-seryl-[protein] + H2O = L-seryl-[protein] + phosphate. The catalysed reaction is O-phospho-L-threonyl-[protein] + H2O = L-threonyl-[protein] + phosphate. Its function is as follows. Has phosphatase activity with synthetic phosphatase substrates and negatively regulates mitogen-activated protein kinase activity, presumably by catalysing their dephosphorylation. Expected to display protein phosphatase activity toward phosphotyrosine, phosphoserine and phosphothreonine residues. The chain is Dual specificity protein phosphatase 8 (Dusp8) from Mus musculus (Mouse).